Here is a 561-residue protein sequence, read N- to C-terminus: MNRVGAVFLFVYERNFFLSIVPDRHRTEIRMSSSERSEVKFDKHFNWWSLLGIAFSLSCSWVGISASMAVGIASGGPLLIIYGLIIAAFFSLMCGISLGDFAAILPNSSGGSFWVLKMLEQESVTLKTPEYEDPSDDDEEVFLENYCQTFNVEVSSKFQKVSSMVVGLLNYFGAIFTTASICSSLSMSCIGIHKLLHPDYELKHWHVFVGYECINAVLTLFNIYSTPLPYISQFGLYTSLLSFAMTFIICIVSRSDNTVDPWPKASNIFGSFDNQTGWNSSGMAFVVGLVNPIWAFVGIDSATHMIDEVGYSKSRFLVPKVIITTIIVGFVTSFIYCVGLFFCITDQTAVVESILPIVEIFYQATGNRNLSVFLQCMCITTGFVSGIASGTWQSRILQSFGKSYAPFYKEGSLGNKSLKKLAVLTPGFKSPLYAHFLSQICVTIIGCIFMGSSTAFNAIITACITLLLMSYAVPSFIFLFVIKKEKFIHRIESDVNCVSRPNRRRMSMIPHIICILWTLFCLVFLSFPYTLPVTAGNMNYTSVVYAVVFCIISIVVFPTCI.

Residues 1–49 are Cytoplasmic-facing; that stretch reads MNRVGAVFLFVYERNFFLSIVPDRHRTEIRMSSSERSEVKFDKHFNWWS. The helical transmembrane segment at 50–70 threads the bilayer; it reads LLGIAFSLSCSWVGISASMAV. The Extracellular portion of the chain corresponds to 71–77; sequence GIASGGP. The helical transmembrane segment at 78-98 threads the bilayer; sequence LLIIYGLIIAAFFSLMCGISL. At 99–160 the chain is on the cytoplasmic side; it reads GDFAAILPNS…NVEVSSKFQK (62 aa). Residues 161–181 form a helical membrane-spanning segment; sequence VSSMVVGLLNYFGAIFTTASI. Residues 182–204 are Extracellular-facing; the sequence is CSSLSMSCIGIHKLLHPDYELKH. The helical transmembrane segment at 205–225 threads the bilayer; that stretch reads WHVFVGYECINAVLTLFNIYS. Residues 226–230 are Cytoplasmic-facing; the sequence is TPLPY. A helical transmembrane segment spans residues 231 to 251; sequence ISQFGLYTSLLSFAMTFIICI. Residues 252 to 281 are Extracellular-facing; that stretch reads VSRSDNTVDPWPKASNIFGSFDNQTGWNSS. A helical membrane pass occupies residues 282-302; sequence GMAFVVGLVNPIWAFVGIDSA. Over 303–321 the chain is Cytoplasmic; the sequence is THMIDEVGYSKSRFLVPKV. A helical transmembrane segment spans residues 322 to 342; the sequence is IITTIIVGFVTSFIYCVGLFF. The Extracellular portion of the chain corresponds to 343–369; sequence CITDQTAVVESILPIVEIFYQATGNRN. A helical transmembrane segment spans residues 370–390; it reads LSVFLQCMCITTGFVSGIASG. At 391 to 439 the chain is on the cytoplasmic side; that stretch reads TWQSRILQSFGKSYAPFYKEGSLGNKSLKKLAVLTPGFKSPLYAHFLSQ. Residues 440 to 460 form a helical membrane-spanning segment; sequence ICVTIIGCIFMGSSTAFNAII. Residue T461 is a topological domain, extracellular. A helical membrane pass occupies residues 462–482; it reads ACITLLLMSYAVPSFIFLFVI. Residues 483 to 507 lie on the Cytoplasmic side of the membrane; it reads KKEKFIHRIESDVNCVSRPNRRRMS. Residues 508–528 form a helical membrane-spanning segment; that stretch reads MIPHIICILWTLFCLVFLSFP. At 529-540 the chain is on the extracellular side; the sequence is YTLPVTAGNMNY. Residues 541 to 560 traverse the membrane as a helical segment; sequence TSVVYAVVFCIISIVVFPTC. Residue I561 is a topological domain, cytoplasmic.

This sequence belongs to the amino acid-polyamine-organocation (APC) superfamily.

The protein localises to the membrane. Transport into the cell of 7-keto 8-aminopelargonic acid. The polypeptide is 7-keto 8-aminopelargonic acid transporter (BIO5) (Saccharomyces cerevisiae (strain ATCC 204508 / S288c) (Baker's yeast)).